The primary structure comprises 644 residues: Chaperone protein DnaK (644 aa).

T199 is subject to Phosphothreonine; by autocatalysis. The disordered stretch occupies residues Y603–K644. A compositionally biased stretch (polar residues) spans E609–T623. The span at G629–K644 shows a compositional bias: acidic residues.

Belongs to the heat shock protein 70 family.

In terms of biological role, acts as a chaperone. This chain is Chaperone protein DnaK, found in Legionella pneumophila (strain Corby).